The following is a 198-amino-acid chain: Auxin-binding protein 1 (198 aa).

An N-terminal signal peptide occupies residues 1–33 (MIVLSVGSASSSPIVVVFSVALLLFYFSETSLG). A disulfide bridge connects residues Cys36 and Cys189. Residues His92, His94, and Glu98 each coordinate Zn(2+). N-linked (GlcNAc...) asparagine glycosylation occurs at Asn130. Residue His141 participates in Zn(2+) binding. The Prevents secretion from ER motif lies at 195–198 (KDEL).

In terms of assembly, homodimer. May interact with the GPI-anchored plasma membrane protein SKU5 and its family members. Interacts with TMK1 (via extracellular domain). Glycosylated. In terms of processing, ubiquitinated by RMA2, leading to proteasomal degradation.

Its subcellular location is the endoplasmic reticulum lumen. The protein resides in the cell membrane. Functionally, auxin receptor that controls cell elongation and cell division. Involved in embryonic morphogenesis. Acts on the cell cycle, endocycle, cell plate formation, and cell expansion and contributes to the control of auxin-related gene expression. Controls root meristem size and mediates auxin responsiveness. Involved in activation of ROP GTPases in response to auxin and regulation of clathrin-mediated endocytosis in roots. Acts as a positive factor in clathrin recruitment to the plasma membrane, thereby promoting endocytosis. Upon auxin binding, restricts the internalization of PIN proteins by inhibiting clathrin-mediated endocytosis. Promotes auxin-triggered phosphorylation status modulation of RAF-like kinases (e.g. RAF20 and RAF24). Involved in the regulation of polar auxin transport. Behaves as a negative regulator of the SCF(TIR1/AFB) signaling pathway, protecting AUX/IAA repressors from degradation. Regulates the expression of cell wall remodeling genes via an SCF(TIR1/AFB)-dependent pathway. Involved in the modulation of hemicellulose xyloglucan structure. Required for rapid auxin-mediated re-orientation of microtubules to regulate cell elongation in roots and dark-grown hypocotyls as well as asymmetric growth during gravitropic responses. Involved in the shade avoidance response. Forms with TMK1 a cell surface auxin perception complex that activates ROP signaling pathways. ABP1 sensing of auxin is important for the ABP1-TMK1 complex formation. Interacts functionally with phytochrome to regulate growth. The protein is Auxin-binding protein 1 of Arabidopsis thaliana (Mouse-ear cress).